We begin with the raw amino-acid sequence, 96 residues long: Co-chaperonin GroES (96 aa).

It belongs to the GroES chaperonin family. Heptamer of 7 subunits arranged in a ring. Interacts with the chaperonin GroEL.

Its subcellular location is the cytoplasm. Its function is as follows. Together with the chaperonin GroEL, plays an essential role in assisting protein folding. The GroEL-GroES system forms a nano-cage that allows encapsulation of the non-native substrate proteins and provides a physical environment optimized to promote and accelerate protein folding. GroES binds to the apical surface of the GroEL ring, thereby capping the opening of the GroEL channel. This Leptothrix cholodnii (strain ATCC 51168 / LMG 8142 / SP-6) (Leptothrix discophora (strain SP-6)) protein is Co-chaperonin GroES.